The chain runs to 262 residues: uncharacterized protein (262 aa).

Residues H7, H9, E96, H132, H156, and D211 each contribute to the a divalent metal cation site.

Belongs to the metallo-dependent hydrolases superfamily. TatD-type hydrolase family. Requires a divalent metal cation as cofactor.

This is an uncharacterized protein from Mycoplasma genitalium (strain ATCC 33530 / DSM 19775 / NCTC 10195 / G37) (Mycoplasmoides genitalium).